The chain runs to 551 residues: Thermophilic beta-amylase (551 aa).

Residues Met-1–Ala-32 form the signal peptide. Asp-73 is a binding site for substrate. Glu-80 contributes to the Ca(2+) binding site. Substrate-binding residues include His-113 and Asp-121. Glu-167 contributes to the Ca(2+) binding site. Residue Glu-195 is the Proton donor of the active site. Substrate-binding residues include Lys-310, His-315, and Thr-353. Residue Glu-392 is the Proton acceptor of the active site. Substrate contacts are provided by residues Asn-393–Ala-394 and Arg-423. The CBM20 domain occupies Leu-448–Asn-551.

The protein belongs to the glycosyl hydrolase 14 family. Monomer. The cofactor is Ca(2+).

The catalysed reaction is Hydrolysis of (1-&gt;4)-alpha-D-glucosidic linkages in polysaccharides so as to remove successive maltose units from the non-reducing ends of the chains.. This chain is Thermophilic beta-amylase, found in Thermoanaerobacterium thermosulfurigenes (Clostridium thermosulfurogenes).